We begin with the raw amino-acid sequence, 547 residues long: Chaperonin GroEL (547 aa).

Residues 30-33 (TLGP), Lys-51, 87-91 (DGTTT), Gly-415, and Asp-495 contribute to the ATP site. A disordered region spans residues 526–547 (KKDTPVPPMPGGGMGGMGGMDF). Residues 536-547 (GGGMGGMGGMDF) are compositionally biased toward gly residues.

This sequence belongs to the chaperonin (HSP60) family. In terms of assembly, forms a cylinder of 14 subunits composed of two heptameric rings stacked back-to-back. Interacts with the co-chaperonin GroES.

The protein localises to the cytoplasm. The enzyme catalyses ATP + H2O + a folded polypeptide = ADP + phosphate + an unfolded polypeptide.. In terms of biological role, together with its co-chaperonin GroES, plays an essential role in assisting protein folding. The GroEL-GroES system forms a nano-cage that allows encapsulation of the non-native substrate proteins and provides a physical environment optimized to promote and accelerate protein folding. The sequence is that of Chaperonin GroEL from Bartonella henselae (strain ATCC 49882 / DSM 28221 / CCUG 30454 / Houston 1) (Rochalimaea henselae).